A 444-amino-acid chain; its full sequence is Methylenetetrahydrofolate--tRNA-(uracil-5-)-methyltransferase TrmFO (444 aa).

10–15 (GAGLAG) lines the FAD pocket.

This sequence belongs to the MnmG family. TrmFO subfamily. Requires FAD as cofactor.

Its subcellular location is the cytoplasm. It catalyses the reaction uridine(54) in tRNA + (6R)-5,10-methylene-5,6,7,8-tetrahydrofolate + NADH + H(+) = 5-methyluridine(54) in tRNA + (6S)-5,6,7,8-tetrahydrofolate + NAD(+). The catalysed reaction is uridine(54) in tRNA + (6R)-5,10-methylene-5,6,7,8-tetrahydrofolate + NADPH + H(+) = 5-methyluridine(54) in tRNA + (6S)-5,6,7,8-tetrahydrofolate + NADP(+). In terms of biological role, catalyzes the folate-dependent formation of 5-methyl-uridine at position 54 (M-5-U54) in all tRNAs. The sequence is that of Methylenetetrahydrofolate--tRNA-(uracil-5-)-methyltransferase TrmFO from Streptococcus pneumoniae (strain ATCC 700669 / Spain 23F-1).